We begin with the raw amino-acid sequence, 252 residues long: Serine/threonine phosphatase stp (252 aa).

The disordered stretch occupies residues 1–22; it reads MHAEFRTDRGRIRHHNEDNGGV. The PPM-type phosphatase domain maps to 2–242; it reads HAEFRTDRGR…DNITVLLVER (241 aa). Asp36, Gly37, Asp194, and Asp233 together coordinate Mn(2+).

It belongs to the PP2C family. The cofactor is Mn(2+).

The protein resides in the cytoplasm. It localises to the membrane. It carries out the reaction O-phospho-L-seryl-[protein] + H2O = L-seryl-[protein] + phosphate. The enzyme catalyses O-phospho-L-threonyl-[protein] + H2O = L-threonyl-[protein] + phosphate. Its function is as follows. Protein phosphatase that dephosphorylates EF-Tu. This Listeria innocua serovar 6a (strain ATCC BAA-680 / CLIP 11262) protein is Serine/threonine phosphatase stp (stp).